The following is a 138-amino-acid chain: Single-stranded DNA-binding protein 3 (138 aa).

The SSB domain maps to 1 to 104 (MINNIVLVGR…VVAENFQLLE (104 aa)). Positions 105-121 (SRNSQQQTNQSGNSSNS) are enriched in low complexity. A disordered region spans residues 105–138 (SRNSQQQTNQSGNSSNSYFGNANKMDISDDDLPF). Positions 133 to 138 (DDDLPF) match the Important for interaction with partner proteins motif.

As to quaternary structure, homotetramer.

Functionally, plays an important role in DNA replication, recombination and repair. Binds to ssDNA and to an array of partner proteins to recruit them to their sites of action during DNA metabolism. In Streptococcus agalactiae serotype V (strain ATCC BAA-611 / 2603 V/R), this protein is Single-stranded DNA-binding protein 3 (ssb3).